The primary structure comprises 351 residues: S-adenosylmethionine:tRNA ribosyltransferase-isomerase (351 aa).

It belongs to the QueA family. Monomer.

The protein localises to the cytoplasm. The enzyme catalyses 7-aminomethyl-7-carbaguanosine(34) in tRNA + S-adenosyl-L-methionine = epoxyqueuosine(34) in tRNA + adenine + L-methionine + 2 H(+). The protein operates within tRNA modification; tRNA-queuosine biosynthesis. Functionally, transfers and isomerizes the ribose moiety from AdoMet to the 7-aminomethyl group of 7-deazaguanine (preQ1-tRNA) to give epoxyqueuosine (oQ-tRNA). The chain is S-adenosylmethionine:tRNA ribosyltransferase-isomerase from Acinetobacter baumannii (strain SDF).